A 294-amino-acid chain; its full sequence is Glutamate-binding protein GluB (294 aa).

The N-terminal stretch at 1-26 (MSHKRMFTRLAAATSAAVLAGITLTA) is a signal peptide. A lipid anchor (N-palmitoyl cysteine) is attached at Cys27. Cys27 carries the S-diacylglycerol cysteine lipid modification.

Belongs to the bacterial solute-binding protein 3 family. As to quaternary structure, the complex is composed of two ATP-binding proteins (GluA), two transmembrane proteins (GluC and GluD) and a solute-binding protein (GluB).

The protein localises to the cell membrane. Its function is as follows. Part of the ABC transporter complex GluABCD involved in glutamate uptake. Binds glutamate with a high affinity. This is Glutamate-binding protein GluB from Corynebacterium efficiens (strain DSM 44549 / YS-314 / AJ 12310 / JCM 11189 / NBRC 100395).